Here is a 344-residue protein sequence, read N- to C-terminus: MLTDRQLLILQVIIDDFIRSGQPVGSRTLSKKHEIALSSATIRNEMADLEELGYIEKTHVSSGRVPSEKGYRYYVDHLLSPQRLTQEDIQKIKSIFAERIYELEKVVQKSAQILSDLTNYTSIALGPAVKENKLKRIQIIPLNQQTAVAIIVTDTGHVENHVITVPASVNPSDLEKMVNILNERLIGVPLVDLKDKIYKEVADVLRTHIHNYDSMLKTIVDTLDIPQEEKMFFAGTTNMLNQPEFSDIQKVRSLMKMIEQEKDFYRLLRKHNRKGIQVTIGRENQLSGMENCSLITATYSIGNEQLGTIAILGPTRMEYSRVITILNRVASDLSTALTKWYQNN.

This sequence belongs to the HrcA family.

In terms of biological role, negative regulator of class I heat shock genes (grpE-dnaK-dnaJ and groELS operons). Prevents heat-shock induction of these operons. This is Heat-inducible transcription repressor HrcA from Geobacillus sp. (strain WCH70).